Here is a 497-residue protein sequence, read N- to C-terminus: Putative endothelial lipase (497 aa).

A signal peptide spans 1–23; the sequence is MRACPFLLLLLLPLLLSLGRIAA. Cys-73 and Cys-86 are disulfide-bonded. 2 N-linked (GlcNAc...) asparagine glycosylation sites follow: Asn-89 and Asn-145. Ser-178 (nucleophile) is an active-site residue. Residue Asp-202 is the Charge relay system of the active site. The cysteines at positions 262 and 282 are disulfide-linked. The active-site Charge relay system is the His-284. Disulfide bonds link Cys-307/Cys-326 and Cys-318/Cys-321. Position 335 to 347 (335 to 347) interacts with heparin; sequence KMRNKRNSKMYLK. Residues 357-492 form the PLAT domain; that stretch reads FHYQLKIHVF…CLKMVKVEKH (136 aa). An N-linked (GlcNAc...) asparagine glycan is attached at Asn-403.

Belongs to the AB hydrolase superfamily. Lipase family. Head to tail homodimer. As to expression, expressed by the venom gland.

The protein localises to the secreted. The catalysed reaction is a triacylglycerol + H2O = a diacylglycerol + a fatty acid + H(+). Its activity is regulated as follows. Inhibited by serum. Functionally, has phospholipase and triglyceride lipase activities. The polypeptide is Putative endothelial lipase (Crotalus adamanteus (Eastern diamondback rattlesnake)).